We begin with the raw amino-acid sequence, 173 residues long: RNA pyrophosphohydrolase (173 aa).

In terms of domain architecture, Nudix hydrolase spans 6-149 (GYRPNVGIIL…KRHVYRRALR (144 aa)). The Nudix box signature appears at 38 to 59 (GGIRRDESPLDAMYRELAEETG).

It belongs to the Nudix hydrolase family. RppH subfamily. The cofactor is a divalent metal cation.

Its function is as follows. Accelerates the degradation of transcripts by removing pyrophosphate from the 5'-end of triphosphorylated RNA, leading to a more labile monophosphorylated state that can stimulate subsequent ribonuclease cleavage. The chain is RNA pyrophosphohydrolase from Thioalkalivibrio sulfidiphilus (strain HL-EbGR7).